The chain runs to 225 residues: Protein-L-isoaspartate O-methyltransferase (225 aa).

S75 is a catalytic residue.

The protein belongs to the methyltransferase superfamily. L-isoaspartyl/D-aspartyl protein methyltransferase family.

Its subcellular location is the cytoplasm. It catalyses the reaction [protein]-L-isoaspartate + S-adenosyl-L-methionine = [protein]-L-isoaspartate alpha-methyl ester + S-adenosyl-L-homocysteine. Functionally, catalyzes the methyl esterification of L-isoaspartyl residues in peptides and proteins that result from spontaneous decomposition of normal L-aspartyl and L-asparaginyl residues. It plays a role in the repair and/or degradation of damaged proteins. The protein is Protein-L-isoaspartate O-methyltransferase of Xanthomonas axonopodis pv. citri (strain 306).